A 283-amino-acid chain; its full sequence is Phosphatidylglycerol--prolipoprotein diacylglyceryl transferase (283 aa).

7 consecutive transmembrane segments (helical) span residues 21–41 (LAIR…LWLA), 60–80 (LLFA…VLFY), 95–115 (VWTG…AMLW), 124–144 (FFTI…AGRL), 176–196 (SQLY…NWFI), 203–223 (GAVS…VEYV), and 239–259 (MGQI…VWAF). Residue Arg-143 participates in a 1,2-diacyl-sn-glycero-3-phospho-(1'-sn-glycerol) binding.

This sequence belongs to the Lgt family.

The protein localises to the cell inner membrane. The catalysed reaction is L-cysteinyl-[prolipoprotein] + a 1,2-diacyl-sn-glycero-3-phospho-(1'-sn-glycerol) = an S-1,2-diacyl-sn-glyceryl-L-cysteinyl-[prolipoprotein] + sn-glycerol 1-phosphate + H(+). Its pathway is protein modification; lipoprotein biosynthesis (diacylglyceryl transfer). Functionally, catalyzes the transfer of the diacylglyceryl group from phosphatidylglycerol to the sulfhydryl group of the N-terminal cysteine of a prolipoprotein, the first step in the formation of mature lipoproteins. This chain is Phosphatidylglycerol--prolipoprotein diacylglyceryl transferase, found in Aliivibrio salmonicida (strain LFI1238) (Vibrio salmonicida (strain LFI1238)).